The primary structure comprises 764 residues: Molybdenum cofactor sulfurase 3 (764 aa).

At K228 the chain carries N6-(pyridoxal phosphate)lysine. C394 is an active-site residue. The 156-residue stretch at L607–L762 folds into the MOSC domain.

This sequence belongs to the class-V pyridoxal-phosphate-dependent aminotransferase family. MOCOS subfamily. It depends on pyridoxal 5'-phosphate as a cofactor.

The catalysed reaction is Mo-molybdopterin + L-cysteine + AH2 = thio-Mo-molybdopterin + L-alanine + A + H2O. Sulfurates the molybdenum cofactor. Sulfation of molybdenum is essential for xanthine dehydrogenase (XDH) and aldehyde oxidase (ADO) enzymes in which molybdenum cofactor is liganded by 1 oxygen and 1 sulfur atom in active form. This is Molybdenum cofactor sulfurase 3 from Aedes aegypti (Yellowfever mosquito).